Consider the following 413-residue polypeptide: Glutamate-1-semialdehyde 2,1-aminomutase (413 aa).

Lys260 bears the N6-(pyridoxal phosphate)lysine mark.

It belongs to the class-III pyridoxal-phosphate-dependent aminotransferase family. HemL subfamily. Pyridoxal 5'-phosphate serves as cofactor.

Its subcellular location is the cytoplasm. It carries out the reaction (S)-4-amino-5-oxopentanoate = 5-aminolevulinate. It functions in the pathway porphyrin-containing compound metabolism; protoporphyrin-IX biosynthesis; 5-aminolevulinate from L-glutamyl-tRNA(Glu): step 2/2. This Methanoregula boonei (strain DSM 21154 / JCM 14090 / 6A8) protein is Glutamate-1-semialdehyde 2,1-aminomutase.